Reading from the N-terminus, the 322-residue chain is Acetyl-coenzyme A carboxylase carboxyl transferase subunit alpha (322 aa).

Positions 40-297 constitute a CoA carboxyltransferase C-terminal domain; that stretch reads PLQKKLGDLR…RETLTRNLEE (258 aa).

This sequence belongs to the AccA family. As to quaternary structure, acetyl-CoA carboxylase is a heterohexamer composed of biotin carboxyl carrier protein (AccB), biotin carboxylase (AccC) and two subunits each of ACCase subunit alpha (AccA) and ACCase subunit beta (AccD).

It localises to the cytoplasm. It carries out the reaction N(6)-carboxybiotinyl-L-lysyl-[protein] + acetyl-CoA = N(6)-biotinyl-L-lysyl-[protein] + malonyl-CoA. It participates in lipid metabolism; malonyl-CoA biosynthesis; malonyl-CoA from acetyl-CoA: step 1/1. Functionally, component of the acetyl coenzyme A carboxylase (ACC) complex. First, biotin carboxylase catalyzes the carboxylation of biotin on its carrier protein (BCCP) and then the CO(2) group is transferred by the carboxyltransferase to acetyl-CoA to form malonyl-CoA. This chain is Acetyl-coenzyme A carboxylase carboxyl transferase subunit alpha, found in Gemmatimonas aurantiaca (strain DSM 14586 / JCM 11422 / NBRC 100505 / T-27).